Reading from the N-terminus, the 339-residue chain is Glycerol-3-phosphate dehydrogenase [NAD(P)+] (339 aa).

Residues Ser-15, Tyr-16, His-36, and Lys-110 each coordinate NADPH. The sn-glycerol 3-phosphate site is built by Lys-110, Gly-139, and Thr-141. Ala-143 lines the NADPH pocket. Sn-glycerol 3-phosphate contacts are provided by Lys-195, Asp-248, Ser-258, Arg-259, and Asn-260. Lys-195 functions as the Proton acceptor in the catalytic mechanism. Arg-259 is an NADPH binding site. NADPH-binding residues include Val-283 and Glu-285.

The protein belongs to the NAD-dependent glycerol-3-phosphate dehydrogenase family.

The protein resides in the cytoplasm. The catalysed reaction is sn-glycerol 3-phosphate + NAD(+) = dihydroxyacetone phosphate + NADH + H(+). The enzyme catalyses sn-glycerol 3-phosphate + NADP(+) = dihydroxyacetone phosphate + NADPH + H(+). Its pathway is membrane lipid metabolism; glycerophospholipid metabolism. Functionally, catalyzes the reduction of the glycolytic intermediate dihydroxyacetone phosphate (DHAP) to sn-glycerol 3-phosphate (G3P), the key precursor for phospholipid synthesis. This chain is Glycerol-3-phosphate dehydrogenase [NAD(P)+], found in Salmonella agona (strain SL483).